We begin with the raw amino-acid sequence, 182 residues long: Transcriptional repressor NrdR (182 aa).

The tract at residues 1–24 (MRCPYCGGLDTQVRDSRPTEDNTA) is disordered. A zinc finger spans residues 3 to 34 (CPYCGGLDTQVRDSRPTEDNTAIRRRRICPDC). Residues 12–24 (QVRDSRPTEDNTA) are compositionally biased toward basic and acidic residues. The ATP-cone domain occupies 49–139 (LMVLKRSGRR…VYRNFREAKD (91 aa)). Positions 146-182 (ELSQPELAQSDDVKAEGGAEGGRDKPKAAGKPPRSAE) are disordered. Residues 156–172 (DDVKAEGGAEGGRDKPK) are compositionally biased toward basic and acidic residues.

It belongs to the NrdR family. Zn(2+) serves as cofactor.

Negatively regulates transcription of bacterial ribonucleotide reductase nrd genes and operons by binding to NrdR-boxes. This is Transcriptional repressor NrdR from Xanthobacter autotrophicus (strain ATCC BAA-1158 / Py2).